The following is a 689-amino-acid chain: Glycine--tRNA ligase beta subunit (689 aa).

Belongs to the class-II aminoacyl-tRNA synthetase family. Tetramer of two alpha and two beta subunits.

It localises to the cytoplasm. The enzyme catalyses tRNA(Gly) + glycine + ATP = glycyl-tRNA(Gly) + AMP + diphosphate. This chain is Glycine--tRNA ligase beta subunit, found in Actinobacillus succinogenes (strain ATCC 55618 / DSM 22257 / CCUG 43843 / 130Z).